A 676-amino-acid chain; its full sequence is tRNA uridine 5-carboxymethylaminomethyl modification enzyme MnmG (676 aa).

FAD is bound at residue 15 to 20; it reads GAGHAG. 316 to 330 is a binding site for NAD(+); sequence GPRYCPSIEDKIVRF.

This sequence belongs to the MnmG family. In terms of assembly, homodimer. Heterotetramer of two MnmE and two MnmG subunits. FAD serves as cofactor.

The protein resides in the cytoplasm. In terms of biological role, NAD-binding protein involved in the addition of a carboxymethylaminomethyl (cmnm) group at the wobble position (U34) of certain tRNAs, forming tRNA-cmnm(5)s(2)U34. This Roseiflexus castenholzii (strain DSM 13941 / HLO8) protein is tRNA uridine 5-carboxymethylaminomethyl modification enzyme MnmG.